The sequence spans 183 residues: MKTINFITGNKNKLAEVQAILGDTIEVQNRAIDVPEIQGSIEEIAKEKCRKAAETVQGPALTEDTALEFNALKGLPGPYIKWFLEALGHDGLNKLLDPYEDKSIVAVCTFAFSSGPGAEPIIFQGKTEGRMVPARGLAKFGWDPIFEYEGNTFAEMDKDEKNLISHRYKALAKLKQWLAETYP.

Residue 8–13 (TGNKNK) participates in ITP binding. Glu-36 provides a ligand contact to Mg(2+). Residues Lys-48, 64 to 65 (DT), Lys-81, 140 to 143 (FGWD), Lys-161, and 166 to 167 (HR) contribute to the ITP site.

The protein belongs to the HAM1 NTPase family. Homodimer. It depends on Mg(2+) as a cofactor. Requires Mn(2+) as cofactor.

It is found in the cytoplasm. It localises to the nucleus. The enzyme catalyses ITP + H2O = IMP + diphosphate + H(+). It catalyses the reaction dITP + H2O = dIMP + diphosphate + H(+). The catalysed reaction is XTP + H2O = XMP + diphosphate + H(+). In terms of biological role, pyrophosphatase that hydrolyzes non-canonical purine nucleotides such as inosine triphosphate (ITP), deoxyinosine triphosphate (dITP) or xanthosine 5'-triphosphate (XTP) to their respective monophosphate derivatives. The enzyme does not distinguish between the deoxy- and ribose forms. Probably excludes non-canonical purines from RNA and DNA precursor pools, thus preventing their incorporation into RNA and DNA and avoiding chromosomal lesions. In Ajellomyces capsulatus (strain G186AR / H82 / ATCC MYA-2454 / RMSCC 2432) (Darling's disease fungus), this protein is Inosine triphosphate pyrophosphatase.